We begin with the raw amino-acid sequence, 454 residues long: tRNA modification GTPase MnmE (454 aa).

(6S)-5-formyl-5,6,7,8-tetrahydrofolate-binding residues include Arg23, Glu80, and Lys120. In terms of domain architecture, TrmE-type G spans 216 to 377 (GMKVVIAGRP…LRNHLKQSMG (162 aa)). Residue Asn226 participates in K(+) binding. GTP is bound by residues 226-231 (NAGKSS), 245-251 (TDIAGTT), 270-273 (DTAG), 335-338 (NKAD), and 358-360 (SAR). Position 230 (Ser230) interacts with Mg(2+). Residues Thr245, Ile247, and Thr250 each coordinate K(+). Mg(2+) is bound at residue Thr251. Lys454 contributes to the (6S)-5-formyl-5,6,7,8-tetrahydrofolate binding site.

The protein belongs to the TRAFAC class TrmE-Era-EngA-EngB-Septin-like GTPase superfamily. TrmE GTPase family. As to quaternary structure, homodimer. Heterotetramer of two MnmE and two MnmG subunits. K(+) serves as cofactor.

It localises to the cytoplasm. Functionally, exhibits a very high intrinsic GTPase hydrolysis rate. Involved in the addition of a carboxymethylaminomethyl (cmnm) group at the wobble position (U34) of certain tRNAs, forming tRNA-cmnm(5)s(2)U34. This chain is tRNA modification GTPase MnmE, found in Citrobacter koseri (strain ATCC BAA-895 / CDC 4225-83 / SGSC4696).